The sequence spans 288 residues: Elongation factor Ts (288 aa).

An involved in Mg(2+) ion dislocation from EF-Tu region spans residues 79–82 (TDFV).

The protein belongs to the EF-Ts family.

Its subcellular location is the cytoplasm. Its function is as follows. Associates with the EF-Tu.GDP complex and induces the exchange of GDP to GTP. It remains bound to the aminoacyl-tRNA.EF-Tu.GTP complex up to the GTP hydrolysis stage on the ribosome. This Ehrlichia ruminantium (strain Welgevonden) protein is Elongation factor Ts.